We begin with the raw amino-acid sequence, 179 residues long: Large ribosomal subunit protein uL5 (179 aa).

It belongs to the universal ribosomal protein uL5 family. Part of the 50S ribosomal subunit; part of the 5S rRNA/L5/L18/L25 subcomplex. Contacts the 5S rRNA and the P site tRNA. Forms a bridge to the 30S subunit in the 70S ribosome.

Its function is as follows. This is one of the proteins that bind and probably mediate the attachment of the 5S RNA into the large ribosomal subunit, where it forms part of the central protuberance. In the 70S ribosome it contacts protein S13 of the 30S subunit (bridge B1b), connecting the 2 subunits; this bridge is implicated in subunit movement. Contacts the P site tRNA; the 5S rRNA and some of its associated proteins might help stabilize positioning of ribosome-bound tRNAs. The polypeptide is Large ribosomal subunit protein uL5 (Enterococcus faecalis (strain ATCC 700802 / V583)).